The chain runs to 701 residues: Polyribonucleotide nucleotidyltransferase (701 aa).

Positions 489 and 495 each coordinate Mg(2+). Residues 556-615 (PRIHTMKIHPDKIREVIGSGGKVIRSITEETGCAIDIEDDGTIRIASSDQASAEQAVKII) enclose the KH domain. Residues 625 to 693 (GQVYEGKVVR…RQGRVKLTMK (69 aa)) form the S1 motif domain.

The protein belongs to the polyribonucleotide nucleotidyltransferase family. Mg(2+) is required as a cofactor.

It is found in the cytoplasm. The enzyme catalyses RNA(n+1) + phosphate = RNA(n) + a ribonucleoside 5'-diphosphate. Its function is as follows. Involved in mRNA degradation. Catalyzes the phosphorolysis of single-stranded polyribonucleotides processively in the 3'- to 5'-direction. This is Polyribonucleotide nucleotidyltransferase from Magnetococcus marinus (strain ATCC BAA-1437 / JCM 17883 / MC-1).